Here is a 413-residue protein sequence, read N- to C-terminus: Serine/threonine-protein phosphatase 2A 55 kDa regulatory subunit B beta isoform (413 aa).

WD repeat units follow at residues 1 to 31, 57 to 98, 141 to 179, and 190 to 230; these read EFNH…KNQV, EIEE…KRPE, AHTY…QSFN, and ELTE…LCDR. At S245 the chain carries Phosphoserine. WD repeat units follow at residues 249–287, 304–345, and 380–412; these read EIIS…RPIE, ENDC…DVTL, and DFSK…QDKV. Y265 carries the post-translational modification Phosphotyrosine. T268 bears the Phosphothreonine mark.

Belongs to the phosphatase 2A regulatory subunit B family. As to quaternary structure, PP2A consists of a common heterodimeric core enzyme, composed of a 36 kDa catalytic subunit (subunit C) and a 65 kDa constant regulatory subunit (PR65 or subunit A), that associates with a variety of regulatory subunits. Proteins that associate with the core dimer include three families of regulatory subunits B (the R2/B/PR55/B55, R3/B''/PR72/PR130/PR59 and R5/B'/B56 families), the 48 kDa variable regulatory subunit, viral proteins, and cell signaling molecules. Interacts with TOMM22. Interacts with IER5 (via N- and C-terminal regions). Brain.

The protein localises to the cytoplasm. The protein resides in the cytoskeleton. It localises to the membrane. In terms of biological role, the B regulatory subunit might modulate substrate selectivity and catalytic activity, and might also direct the localization of the catalytic enzyme to a particular subcellular compartment. In Oryctolagus cuniculus (Rabbit), this protein is Serine/threonine-protein phosphatase 2A 55 kDa regulatory subunit B beta isoform (PPP2R2B).